We begin with the raw amino-acid sequence, 63 residues long: Large ribosomal subunit protein uL29 (63 aa).

The protein belongs to the universal ribosomal protein uL29 family.

The chain is Large ribosomal subunit protein uL29 from Vibrio vulnificus (strain CMCP6).